The following is a 60-amino-acid chain: Large ribosomal subunit protein bL33 (60 aa).

This sequence belongs to the bacterial ribosomal protein bL33 family.

The chain is Large ribosomal subunit protein bL33 from Flavobacterium psychrophilum (strain ATCC 49511 / DSM 21280 / CIP 103535 / JIP02/86).